Consider the following 646-residue polypeptide: Stage V sporulation protein D (646 aa).

Ser294 serves as the catalytic Acyl-ester intermediate. One can recognise a PASTA domain in the interval 580 to 638; sequence DTKTIEVPNVVGMSVSDLESLLVNLNVDASGKGSKIVKQSPAAGTKVKEGSKIRVYLTE.

This sequence belongs to the transpeptidase family.

It is found in the cell membrane. The catalysed reaction is Preferential cleavage: (Ac)2-L-Lys-D-Ala-|-D-Ala. Also transpeptidation of peptidyl-alanyl moieties that are N-acyl substituents of D-alanine.. It participates in cell wall biogenesis; peptidoglycan biosynthesis. Penicillin-binding protein with an unknown catalytic activity. May have a specialized role in the morphogenesis of spore cortex, which is a modified form of peptidoglycan. Spore cortex formation is determined primarily by the mother cell. The polypeptide is Stage V sporulation protein D (spoVD) (Bacillus subtilis (strain 168)).